The sequence spans 191 residues: ECF RNA polymerase sigma-E factor (191 aa).

Positions 1 to 153 (MSEQLTDQVL…MAITLRELDG (153 aa)) are binds RNAP core. Positions 25–92 (LVVRYQHKVA…KNYLVAQGRR (68 aa)) are sigma-70 factor domain-2. Positions 48-61 (DVVQEAFIKAYRAL) match the Polymerase core binding motif. A sigma-70 factor domain-4 region spans residues 129 to 180 (QIVFRTIESLPEDLRMAITLRELDGLSYEEIAAIMDCPVGTVRSRIFRAREA). Residues 156-175 (YEEIAAIMDCPVGTVRSRIF) constitute a DNA-binding region (H-T-H motif).

It belongs to the sigma-70 factor family. ECF subfamily. In terms of assembly, interacts transiently with the RNAP catalytic core formed by RpoA, RpoB, RpoC and RpoZ (2 alpha, 1 beta, 1 beta' and 1 omega subunit) to form the RNAP holoenzyme that can initiate transcription. Interacts 1:1 with anti-sigma-E factor RseA which prevents binding to RNAP catalytic core.

Its subcellular location is the cytoplasm. ECF sigma-E is held in an inactive form by its cognate anti-sigma factor (RseA) until released by regulated intramembrane proteolysis (RIP). RIP occurs when an extracytoplasmic signal (periplasmic stress and excess LPS) triggers a concerted proteolytic cascade to transmit information and elicit cellular responses. The anti-sigma factor RseA is an inner membrane protein, binding sigma-E in the cytoplasm and RseB in the periplasm. RseA is first cut extracytoplasmically (site-1 protease, S1P, by DegS), then within the membrane itself (site-2 protease, S2P, by RseP), while cytoplasmic proteases (predominantly ClpX-ClpP) finish degrading the regulatory protein, liberating sigma-E. Degradation of RseA requires 2 signals to activate DegS; an outer membrane protein (OMP) signal activates DegS, while an LPS signal causes release of RseB from RseA, freeing RseA to be cleaved. Functionally, sigma factors are initiation factors that promote the attachment of RNA polymerase (RNAP) to specific initiation sites and are then released. Extracytoplasmic function (ECF) sigma-E controls the envelope stress response, responding to periplasmic protein stress, increased levels of periplasmic lipopolysaccharide (LPS) as well as heat shock and oxidative stress; it controls protein processing in the extracytoplasmic compartment. This Escherichia coli O157:H7 protein is ECF RNA polymerase sigma-E factor (rpoE).